Consider the following 611-residue polypeptide: Leukotriene A-4 hydrolase (611 aa).

At lysine 73 the chain carries N6-acetyllysine. A peptide is bound by residues 135–137 (QCQ) and 267–272 (SYGGME). Residue histidine 296 participates in Zn(2+) binding. Glutamate 297 (proton acceptor) is an active-site residue. Zn(2+) contacts are provided by histidine 300 and glutamate 319. N6-acetyllysine is present on lysine 337. Tyrosine 384 (proton donor) is an active-site residue. Lysine 414 is subject to N6-acetyllysine. At serine 416 the chain carries Phosphoserine. 564-566 (RMK) lines the a peptide pocket. N6-acetyllysine is present on lysine 573.

This sequence belongs to the peptidase M1 family. Monomer. Zn(2+) serves as cofactor. In terms of processing, phosphorylation at Ser-416 inhibits leukotriene-A4 hydrolase activity. activity.

It is found in the cytoplasm. It catalyses the reaction leukotriene A4 + H2O = leukotriene B4. The enzyme catalyses (5S,6S)-epoxy-(18R)-hydroxy-(7E,9E,11Z,14Z,16E)-eicosapentaenoate + H2O = resolvin E1. It carries out the reaction (5S,6S)-epoxy-(18S)-hydroxy-(7E,9E,11Z,14Z,16E)-eicosapentaenoate + H2O = 18S-resolvin E1. The catalysed reaction is Release of the N-terminal residue from a tripeptide.. It functions in the pathway lipid metabolism; leukotriene B4 biosynthesis. Its activity is regulated as follows. Inhibited by bestatin. The epoxide hydrolase activity is restrained by suicide inactivation that involves binding of LTA4 to Tyr-379. 4-(4-benzylphenyl)thiazol-2-amine (ARM1) selectively inhibits the epoxide hydrolase activity. Functionally, bifunctional zinc metalloenzyme that comprises both epoxide hydrolase (EH) and aminopeptidase activities. Acts as an epoxide hydrolase to catalyze the conversion of LTA4 to the pro-inflammatory mediator leukotriene B4 (LTB4). Also has aminopeptidase activity, with high affinity for N-terminal arginines of various synthetic tripeptides. In addition to its pro-inflammatory EH activity, may also counteract inflammation by its aminopeptidase activity, which inactivates by cleavage another neutrophil attractant, the tripeptide Pro-Gly-Pro (PGP), a bioactive fragment of collagen generated by the action of matrix metalloproteinase-9 (MMP9) and prolylendopeptidase (PREPL). Involved also in the biosynthesis of resolvin E1 and 18S-resolvin E1 from eicosapentaenoic acid, two lipid mediators that show potent anti-inflammatory and pro-resolving actions. The sequence is that of Leukotriene A-4 hydrolase (LTA4H) from Cavia porcellus (Guinea pig).